Here is a 359-residue protein sequence, read N- to C-terminus: Serum paraoxonase/arylesterase 1 (359 aa).

Residues Cys-42 and Cys-353 are joined by a disulfide bond. A glycan (N-linked (GlcNAc...) asparagine) is linked at Asn-50. Ca(2+)-binding residues include Glu-53 and Asp-54. The active-site Proton acceptor is His-115. Ile-117, Asn-168, Asp-169, and Asn-224 together coordinate Ca(2+). An N-linked (GlcNAc...) asparagine glycan is attached at Asn-253. Residues Asp-269 and Asn-270 each coordinate Ca(2+). N-linked (GlcNAc...) asparagine glycans are attached at residues Asn-270 and Asn-324.

The protein belongs to the paraoxonase family. Homodimer. Interacts with CLU. It depends on Ca(2+) as a cofactor. In terms of processing, glycosylated. Post-translationally, the signal sequence is not cleaved. Plasma. Associated with HDL.

The protein localises to the secreted. Its subcellular location is the extracellular space. The catalysed reaction is a phenyl acetate + H2O = a phenol + acetate + H(+). The enzyme catalyses An aryl dialkyl phosphate + H2O = dialkyl phosphate + an aryl alcohol.. It catalyses the reaction an N-acyl-L-homoserine lactone + H2O = an N-acyl-L-homoserine + H(+). Its function is as follows. Hydrolyzes the toxic metabolites of a variety of organophosphorus insecticides. Capable of hydrolyzing a broad spectrum of organophosphate substrates and lactones, and a number of aromatic carboxylic acid esters. Mediates an enzymatic protection of low density lipoproteins against oxidative modification. The sequence is that of Serum paraoxonase/arylesterase 1 (PON1) from Oryctolagus cuniculus (Rabbit).